A 538-amino-acid chain; its full sequence is Zinc finger protein with KRAB and SCAN domains 3 (538 aa).

Ser42 bears the Phosphoserine mark. Residues 46-128 (RERFRGFRYP…VLLEYLERQL (83 aa)) enclose the SCAN box domain. Lys171 is covalently cross-linked (Glycyl lysine isopeptide (Lys-Gly) (interchain with G-Cter in SUMO2)). Thr207 carries the post-translational modification Phosphothreonine. The KRAB domain maps to 214 to 274 (LKVEDVALTL…PAEELPEKEH (61 aa)). Residues 226–236 (EWTQQDSSQGN) are compositionally biased toward polar residues. The tract at residues 226-274 (EWTQQDSSQGNLCRDEKQENHGSLVSLGDEKQTKSRDLPPAEELPEKEH) is disordered. Residues 253–274 (GDEKQTKSRDLPPAEELPEKEH) show a composition bias toward basic and acidic residues. C2H2-type zinc fingers lie at residues 314–336 (HICHECGKSFAQSSGLSKHRRIH), 342–364 (YECEECGKAFIGSSALVIHQRVH), 370–392 (YECEECGKAFSHSSDLIKHQRTH), 398–420 (YECDDCGKTFSQSCSLLEHHRIH), and 426–448 (YQCSMCGKAFRRSSHLLRHQRIH). A Phosphothreonine modification is found at Thr449. 2 C2H2-type zinc fingers span residues 480–502 (YKCNECERSFTQNTGLIEHQKIH) and 508–530 (YQCNACGKGFTRISYLVQHQRSH).

The protein belongs to the krueppel C2H2-type zinc-finger protein family.

It localises to the nucleus. The protein localises to the cytoplasm. Its function is as follows. Transcriptional factor that binds to the consensus sequence 5'-[GT][AG][AGT]GGGG-3' and acts as a repressor of autophagy. Specifically represses expression of genes involved in autophagy and lysosome biogenesis/function such as MAP1LC3B, ULK1 or WIPI2. Associates with chromatin at the ITGB4 and VEGF promoters. Also acts as a transcription activator and promotes cancer cell progression and/or migration in various tumors and myelomas. This Homo sapiens (Human) protein is Zinc finger protein with KRAB and SCAN domains 3 (ZKSCAN3).